Here is a 699-residue protein sequence, read N- to C-terminus: Elongation factor G (699 aa).

Positions 8-287 constitute a tr-type G domain; sequence EKLRNIGIVA…AVIDYLPSPI (280 aa). Residues 17–24, 85–89, and 139–142 contribute to the GTP site; these read AHIDAGKT, DTPGH, and NKMD.

It belongs to the TRAFAC class translation factor GTPase superfamily. Classic translation factor GTPase family. EF-G/EF-2 subfamily.

It localises to the cytoplasm. Catalyzes the GTP-dependent ribosomal translocation step during translation elongation. During this step, the ribosome changes from the pre-translocational (PRE) to the post-translocational (POST) state as the newly formed A-site-bound peptidyl-tRNA and P-site-bound deacylated tRNA move to the P and E sites, respectively. Catalyzes the coordinated movement of the two tRNA molecules, the mRNA and conformational changes in the ribosome. This is Elongation factor G (fusA) from Aquifex aeolicus (strain VF5).